Here is a 442-residue protein sequence, read N- to C-terminus: Trigger factor (442 aa).

The region spanning 162 to 247 (GDTVTIDYKG…IHEVKSKQLP (86 aa)) is the PPIase FKBP-type domain.

Belongs to the FKBP-type PPIase family. Tig subfamily.

It is found in the cytoplasm. The enzyme catalyses [protein]-peptidylproline (omega=180) = [protein]-peptidylproline (omega=0). Functionally, involved in protein export. Acts as a chaperone by maintaining the newly synthesized protein in an open conformation. Functions as a peptidyl-prolyl cis-trans isomerase. The sequence is that of Trigger factor from Lactobacillus acidophilus (strain ATCC 700396 / NCK56 / N2 / NCFM).